The following is a 355-amino-acid chain: MNKSLFSLILLIITIFNLASNINIVSAISNFNINNNNKNNNDNKEIRFPTDIIIDDSTEINFNNHEDNNNNNNNNNNNNNAYNEDSGNSVQLGDIECVVCLDFLDSYLPTLVKIISEYGVIESCSKICGLLNKTDEIDICTGLCDLVGVDTFWKIFVTNDINPFYACELITACSTPKNPAADFISLGVSPAIGQSGSKFLIDLTFQVVNTTGAGQFAFIVFYTQTQSKFINYQLFEGFSPGNYSVKYDFETTNNSTFINGQYPVTVYMCNGECGTMYSTLLNQTTSYFTISNPTPTPTPTPSNSTTPTPTPTNSTPTPTSTSTPTSTPTSTPTPTPTSSSSTKTHSSHYKNKINK.

An N-terminal signal peptide occupies residues 1 to 27 (MNKSLFSLILLIITIFNLASNINIVSA). Residues 63 to 83 (NNHEDNNNNNNNNNNNNNAYN) are disordered. The segment covering 69-83 (NNNNNNNNNNNNAYN) has biased composition (low complexity). Positions 93 to 177 (GDIECVVCLD…ELITACSTPK (85 aa)) constitute a Saposin B-type domain. 3 disulfide bridges follow: C97/C173, C100/C167, and C128/C140. N-linked (GlcNAc...) asparagine glycosylation is found at N132, N209, N242, N253, N254, N282, and N303. Residues 290–355 (ISNPTPTPTP…SSHYKNKINK (66 aa)) form a disordered region. Low complexity predominate over residues 301 to 342 (PSNSTTPTPTPTNSTPTPTSTSTPTSTPTSTPTPTPTSSSST). Basic residues predominate over residues 345–355 (HSSHYKNKINK).

Belongs to the countin family.

It localises to the secreted. The chain is Countin-like protein from Dictyostelium discoideum (Social amoeba).